A 98-amino-acid polypeptide reads, in one-letter code: Gibberellin-regulated protein 1 (98 aa).

Residues 1-23 form the signal peptide; it reads MAISKALIASLLISLLVLQLVQA.

It belongs to the GASA family. In terms of processing, six disulfide bonds may be present. As to expression, expressed in flower buds, style, stamen filaments, vasculature of sepals, flower abscission zone and green siliques. Lower levels seen in the root phloem, cotyledons and vasculature of rosette leaves.

It localises to the secreted. In terms of biological role, gibberellin-regulated protein that may function in hormonal controlled steps of development such as seed germination, flowering and seed maturation. This is Gibberellin-regulated protein 1 (GASA1) from Arabidopsis thaliana (Mouse-ear cress).